We begin with the raw amino-acid sequence, 443 residues long: Xaa-Pro dipeptidase (443 aa).

Mn(2+) is bound by residues D246, D257, H339, E384, and E423.

Belongs to the peptidase M24B family. Bacterial-type prolidase subfamily. Mn(2+) serves as cofactor.

The catalysed reaction is Xaa-L-Pro dipeptide + H2O = an L-alpha-amino acid + L-proline. Its function is as follows. Splits dipeptides with a prolyl residue in the C-terminal position. The chain is Xaa-Pro dipeptidase from Salmonella arizonae (strain ATCC BAA-731 / CDC346-86 / RSK2980).